Reading from the N-terminus, the 304-residue chain is Glycine--tRNA ligase alpha subunit (304 aa).

Belongs to the class-II aminoacyl-tRNA synthetase family. Tetramer of two alpha and two beta subunits.

It is found in the cytoplasm. The enzyme catalyses tRNA(Gly) + glycine + ATP = glycyl-tRNA(Gly) + AMP + diphosphate. In Vibrio atlanticus (strain LGP32) (Vibrio splendidus (strain Mel32)), this protein is Glycine--tRNA ligase alpha subunit.